The following is a 111-amino-acid chain: BET1-like protein (111 aa).

Residues 1 to 86 (MADWARAQSP…MARSGRDNRK (86 aa)) lie on the Cytoplasmic side of the membrane. A phosphoserine mark is found at S9 and S37. Positions 15–77 (EILDRENKRM…TGSVKRFSTM (63 aa)) constitute a t-SNARE coiled-coil homology domain. The helical; Anchor for type IV membrane protein transmembrane segment at 87-107 (LLCGMAVGLIVAFFILSYFLS) threads the bilayer. At 108–111 (RART) the chain is on the lumenal side.

Component of a SNARE complex consisting of STX5, YKT6, GOSR1 and BET1L. Interacts with STX5.

It localises to the golgi apparatus membrane. The protein resides in the golgi apparatus. It is found in the trans-Golgi network membrane. Its function is as follows. Vesicle SNARE required for targeting and fusion of retrograde transport vesicles with the Golgi complex. Required for the integrity of the Golgi complex. This is BET1-like protein from Pongo abelii (Sumatran orangutan).